Here is a 169-residue protein sequence, read N- to C-terminus: Peptide deformylase (169 aa).

The Fe cation site is built by C91 and H133. E134 is a catalytic residue. H137 lines the Fe cation pocket.

This sequence belongs to the polypeptide deformylase family. The cofactor is Fe(2+).

It catalyses the reaction N-terminal N-formyl-L-methionyl-[peptide] + H2O = N-terminal L-methionyl-[peptide] + formate. Removes the formyl group from the N-terminal Met of newly synthesized proteins. Requires at least a dipeptide for an efficient rate of reaction. N-terminal L-methionine is a prerequisite for activity but the enzyme has broad specificity at other positions. In Serratia proteamaculans (strain 568), this protein is Peptide deformylase.